A 284-amino-acid polypeptide reads, in one-letter code: MEAIKKKMQMLKLDKENAIDRAEQAEADKKQAEDRCKQLEEEQQGLQKKLKGTEDEVEKYSESVKEAQEKLEQAEKKATDAEAEVASLNRRIQLVEEELDRAQERLATALQKLEEAEKAADESERGMKVIENRAMKDEEKMELQEMQLKEAKHIAEEADRKYEEVARKLVVLEGELERSEERAEVAESKCGDLEEELKIVTNNLKSLEAQADKYSTKEDKYEEEIKLLGEKLKEAETRAEFAERSVAKLEKTIDDLEDEVYAQKMKYKAISEELDNALNDITSL.

Position 1 is an N-acetylmethionine (M1). Residues 1–284 (MEAIKKKMQM…DNALNDITSL (284 aa)) adopt a coiled-coil conformation. Basic and acidic residues-rich tracts occupy residues 22–40 (AEQA…KQLE) and 51–66 (KGTE…SVKE). Residues 22–66 (AEQAEADKKQAEDRCKQLEEEQQGLQKKLKGTEDEVEKYSESVKE) are disordered.

It belongs to the tropomyosin family. As to quaternary structure, homodimer. Heterodimer of an alpha (TPM1, TPM3 or TPM4) and a beta (TPM2) chain.

The protein resides in the cytoplasm. It localises to the cytoskeleton. Its function is as follows. Binds to actin filaments in muscle and non-muscle cells. Plays a central role, in association with the troponin complex, in the calcium dependent regulation of vertebrate striated muscle contraction. Smooth muscle contraction is regulated by interaction with caldesmon. In non-muscle cells is implicated in stabilizing cytoskeleton actin filaments. In Gallus gallus (Chicken), this protein is Tropomyosin beta chain (TPM2).